Reading from the N-terminus, the 311-residue chain is Methionyl-tRNA formyltransferase (311 aa).

Ser-110–Pro-113 lines the (6S)-5,6,7,8-tetrahydrofolate pocket.

Belongs to the Fmt family.

The catalysed reaction is L-methionyl-tRNA(fMet) + (6R)-10-formyltetrahydrofolate = N-formyl-L-methionyl-tRNA(fMet) + (6S)-5,6,7,8-tetrahydrofolate + H(+). Functionally, attaches a formyl group to the free amino group of methionyl-tRNA(fMet). The formyl group appears to play a dual role in the initiator identity of N-formylmethionyl-tRNA by promoting its recognition by IF2 and preventing the misappropriation of this tRNA by the elongation apparatus. This chain is Methionyl-tRNA formyltransferase, found in Streptococcus pyogenes serotype M12 (strain MGAS2096).